The sequence spans 209 residues: Imidazoleglycerol-phosphate dehydratase (209 aa).

Residues 1–23 (MQLSDRPLTAPGTAPRQATVSRR) are disordered.

This sequence belongs to the imidazoleglycerol-phosphate dehydratase family.

The protein resides in the cytoplasm. The enzyme catalyses D-erythro-1-(imidazol-4-yl)glycerol 3-phosphate = 3-(imidazol-4-yl)-2-oxopropyl phosphate + H2O. It participates in amino-acid biosynthesis; L-histidine biosynthesis; L-histidine from 5-phospho-alpha-D-ribose 1-diphosphate: step 6/9. This is Imidazoleglycerol-phosphate dehydratase from Synechococcus elongatus (strain ATCC 33912 / PCC 7942 / FACHB-805) (Anacystis nidulans R2).